Consider the following 229-residue polypeptide: MKVGIVGAMAQEVEILASLIENKNVVHIAGCTIYQGNIQDKEVALLQSGIGKVAAAMGTTLLLQMFKPDIVINTGSAGGVSSGLKVGDVVVSTQTVYHDADVTAFGYAKGQLPACPPAFISDPKLTALVENVAEQQGINLTSGLICSGDSFINSAEKLAWIKANFPEVVAIEMEATAIAQVCHKFNIPFVVIRAISDVGDGEASISFEEFLPLAARQSSSMVLKILQSL.

Glu12 serves as the catalytic Proton acceptor. Residues Gly78, Ile152, and 173 to 174 (ME) each bind substrate. Asp197 (proton donor) is an active-site residue.

Belongs to the PNP/UDP phosphorylase family. MtnN subfamily.

It carries out the reaction S-adenosyl-L-homocysteine + H2O = S-(5-deoxy-D-ribos-5-yl)-L-homocysteine + adenine. It catalyses the reaction S-methyl-5'-thioadenosine + H2O = 5-(methylsulfanyl)-D-ribose + adenine. The catalysed reaction is 5'-deoxyadenosine + H2O = 5-deoxy-D-ribose + adenine. It participates in amino-acid biosynthesis; L-methionine biosynthesis via salvage pathway; S-methyl-5-thio-alpha-D-ribose 1-phosphate from S-methyl-5'-thioadenosine (hydrolase route): step 1/2. Catalyzes the irreversible cleavage of the glycosidic bond in both 5'-methylthioadenosine (MTA) and S-adenosylhomocysteine (SAH/AdoHcy) to adenine and the corresponding thioribose, 5'-methylthioribose and S-ribosylhomocysteine, respectively. Also cleaves 5'-deoxyadenosine, a toxic by-product of radical S-adenosylmethionine (SAM) enzymes, into 5-deoxyribose and adenine. The chain is 5'-methylthioadenosine/S-adenosylhomocysteine nucleosidase from Histophilus somni (strain 2336) (Haemophilus somnus).